A 429-amino-acid polypeptide reads, in one-letter code: Asparagine--tRNA ligase (429 aa).

Belongs to the class-II aminoacyl-tRNA synthetase family.

It localises to the cytoplasm. The catalysed reaction is tRNA(Asn) + L-asparagine + ATP = L-asparaginyl-tRNA(Asn) + AMP + diphosphate + H(+). The sequence is that of Asparagine--tRNA ligase from Thermoplasma acidophilum (strain ATCC 25905 / DSM 1728 / JCM 9062 / NBRC 15155 / AMRC-C165).